The sequence spans 2190 residues: Highly-reducing polyketide synthase 1 (2190 aa).

Residues 6–431 (LTPVAIVGYA…GANAHVVLGA (426 aa)) form the Ketosynthase family 3 (KS3) domain. Residues cysteine 179, histidine 315, and histidine 355 each act as for beta-ketoacyl synthase activity in the active site. Residues 541–857 (FVFTGQGAQW…VSVLARGQNA (317 aa)) enclose the Malonyl-CoA:ACP transacylase (MAT) domain. An N-terminal hotdog fold region spans residues 925-1061 (NDLLGSLADW…GLVGVRNSPA (137 aa)). The region spanning 925–1246 (NDLLGSLADW…MTPLRESSGS (322 aa)) is the PKS/mFAS DH domain. Residue histidine 957 is the Proton acceptor; for dehydratase activity of the active site. The tract at residues 1089–1246 (TETVDVQAMY…MTPLRESSGS (158 aa)) is C-terminal hotdog fold. Residue aspartate 1154 is the Proton donor; for dehydratase activity of the active site. An Enoyl reductase (ER) domain is found at 1494–1804 (GSLDSFYFVD…SGKSMGKLVI (311 aa)). A Ketoreductase (KR) domain is found at 1828–2005 (ASYLIVGGTG…GTSLDLTAVS (178 aa)). The 78-residue stretch at 2107-2184 (KALEVLYGAL…ELAKLISKKS (78 aa)) folds into the Carrier domain. An O-(pantetheine 4'-phosphoryl)serine modification is found at serine 2144.

Pantetheine 4'-phosphate serves as cofactor.

Its function is as follows. Highly-reducing polyketide synthase; part of the gene cluster that mediates the biosynthesis of liamocins, glycolipids (also called heavy oils) composed of a single mannitol or arabitol headgroup linked to either three, four or even six 3,5-dihydroxydecanoic ester tail-groups. Within the pathway, PKS1 is responsible for biosynthesis of 3,5-dihydroxydecanoic acid from acetyl-CoA and malonyl-CoA. A phosphopantetheine transferase (PPTase) activates the HR-PKS. The esterase EST1 then catalyzes ester bond formation between 3,5-dihydroxydecanoic acid and mannitol (provided by the mannitol-1-phosphate 5-dehydrogenase and the NADP-dependent mannitol dehydrogenase) or arabinol (provided by the L-arabinitol 4-dehydrogenase). This Aureobasidium melanogenum (Aureobasidium pullulans var. melanogenum) protein is Highly-reducing polyketide synthase 1.